A 243-amino-acid chain; its full sequence is 1-(5-phosphoribosyl)-5-[(5-phosphoribosylamino)methylideneamino] imidazole-4-carboxamide isomerase (243 aa).

The Proton acceptor role is filled by aspartate 8. Residue aspartate 130 is the Proton donor of the active site.

Belongs to the HisA/HisF family.

The protein localises to the cytoplasm. The catalysed reaction is 1-(5-phospho-beta-D-ribosyl)-5-[(5-phospho-beta-D-ribosylamino)methylideneamino]imidazole-4-carboxamide = 5-[(5-phospho-1-deoxy-D-ribulos-1-ylimino)methylamino]-1-(5-phospho-beta-D-ribosyl)imidazole-4-carboxamide. The protein operates within amino-acid biosynthesis; L-histidine biosynthesis; L-histidine from 5-phospho-alpha-D-ribose 1-diphosphate: step 4/9. This is 1-(5-phosphoribosyl)-5-[(5-phosphoribosylamino)methylideneamino] imidazole-4-carboxamide isomerase from Vesicomyosocius okutanii subsp. Calyptogena okutanii (strain HA).